Reading from the N-terminus, the 254-residue chain is Triosephosphate isomerase (254 aa).

Residue 10–12 (NWK) coordinates substrate. His-99 acts as the Electrophile in catalysis. Glu-169 functions as the Proton acceptor in the catalytic mechanism. Substrate contacts are provided by residues Gly-175, Ser-215, and 236-237 (GG).

This sequence belongs to the triosephosphate isomerase family. Homodimer.

The protein resides in the cytoplasm. It carries out the reaction D-glyceraldehyde 3-phosphate = dihydroxyacetone phosphate. It functions in the pathway carbohydrate biosynthesis; gluconeogenesis. It participates in carbohydrate degradation; glycolysis; D-glyceraldehyde 3-phosphate from glycerone phosphate: step 1/1. Involved in the gluconeogenesis. Catalyzes stereospecifically the conversion of dihydroxyacetone phosphate (DHAP) to D-glyceraldehyde-3-phosphate (G3P). This Chlamydia caviae (strain ATCC VR-813 / DSM 19441 / 03DC25 / GPIC) (Chlamydophila caviae) protein is Triosephosphate isomerase.